Here is a 162-residue protein sequence, read N- to C-terminus: Putative pre-16S rRNA nuclease (162 aa).

It belongs to the YqgF nuclease family.

It is found in the cytoplasm. Could be a nuclease involved in processing of the 5'-end of pre-16S rRNA. The chain is Putative pre-16S rRNA nuclease from Brucella melitensis biotype 2 (strain ATCC 23457).